Here is a 244-residue protein sequence, read N- to C-terminus: HTH-type transcriptional regulator RdgA (244 aa).

Positions 9–62 (LKTARTAQGLSQKALGDMIGVSQAAIQKIEVGKASQTTKIVELSNNLRVRPEWL) constitute an HTH cro/C1-type domain. The segment at residues 20–39 (QKALGDMIGVSQAAIQKIEV) is a DNA-binding region (H-T-H motif).

In terms of biological role, regulates pectin lyase production in response to DNA damage. This is HTH-type transcriptional regulator RdgA (rdgA) from Pectobacterium carotovorum subsp. carotovorum (Erwinia carotovora subsp. carotovora).